Consider the following 239-residue polypeptide: Splicing factor U2AF 35 kDa subunit (239 aa).

At Ala2 the chain carries N-acetylalanine. The segment at 12 to 40 adopts a C3H1-type 1 zinc-finger fold; that stretch reads EKDKVNCSFYFKIGACRHGDRCSRLHNKP. An N6-methyllysine modification is found at Lys39. Residues Ser61 and Ser145 each carry the phosphoserine modification. One can recognise an RRM domain in the interval 65-147; that stretch reads LRCAVSDVEM…QPIHAELSPV (83 aa). A C3H1-type 2 zinc finger spans residues 149-176; it reads DFREACCRQYEMGECTRGGFCNFMHLKP. Arg165 carries the omega-N-methylarginine modification. The segment at 183 to 239 is disordered; that stretch reads RELYGRRRKKHRSRSRSRERRSRSRDRGRGGGGGGGGGGGRERDRRRSRDRERSGRF. A compositionally biased stretch (basic residues) spans 188–208; that stretch reads RRRKKHRSRSRSRERRSRSRD. A compositionally biased stretch (gly residues) spans 212 to 221; the sequence is GGGGGGGGGG. Residues 222-239 show a composition bias toward basic and acidic residues; it reads GRERDRRRSRDRERSGRF.

Belongs to the splicing factor SR family. Identified in the spliceosome C complex. Heterodimer with U2AF2. Interacts (via RS domain) with PHF5A (via N-terminus). Interacts with ZRANB2. Interacts with SDE2. Interacts with SF3B1. Expressed in primary spermatocytes and elongating spermatids (at protein level).

It is found in the nucleus. It localises to the nucleus speckle. In terms of biological role, plays a critical role in both constitutive and enhancer-dependent splicing by mediating protein-protein interactions and protein-RNA interactions required for accurate 3'-splice site selection. Recruits U2 snRNP to the branch point. Directly mediates interactions between U2AF2 and proteins bound to the enhancers and thus may function as a bridge between U2AF2 and the enhancer complex to recruit it to the adjacent intron. The polypeptide is Splicing factor U2AF 35 kDa subunit (U2af1) (Mus musculus (Mouse)).